The following is a 208-amino-acid chain: Urease accessory protein UreG 1 (208 aa).

14-21 is a GTP binding site; sequence GPVGSGKT.

Belongs to the SIMIBI class G3E GTPase family. UreG subfamily. Homodimer. UreD, UreF and UreG form a complex that acts as a GTP-hydrolysis-dependent molecular chaperone, activating the urease apoprotein by helping to assemble the nickel containing metallocenter of UreC. The UreE protein probably delivers the nickel.

The protein localises to the cytoplasm. In terms of biological role, facilitates the functional incorporation of the urease nickel metallocenter. This process requires GTP hydrolysis, probably effectuated by UreG. Its function is as follows. Disruption of the ure1 gene cluster suggests that it protects brucellae during their passage through the stomach. The major route of infection in human brucellosis is oral. In Brucella abortus (strain 2308), this protein is Urease accessory protein UreG 1.